A 545-amino-acid chain; its full sequence is Chaperonin GroEL (545 aa).

ATP is bound by residues 29–32 (TMGP), K50, 86–90 (DGTTT), G414, 477–479 (DAA), and D493.

The protein belongs to the chaperonin (HSP60) family. As to quaternary structure, forms a cylinder of 14 subunits composed of two heptameric rings stacked back-to-back. Interacts with the co-chaperonin GroES.

Its subcellular location is the cytoplasm. It carries out the reaction ATP + H2O + a folded polypeptide = ADP + phosphate + an unfolded polypeptide.. In terms of biological role, together with its co-chaperonin GroES, plays an essential role in assisting protein folding. The GroEL-GroES system forms a nano-cage that allows encapsulation of the non-native substrate proteins and provides a physical environment optimized to promote and accelerate protein folding. The chain is Chaperonin GroEL from Campylobacter jejuni subsp. jejuni serotype O:6 (strain 81116 / NCTC 11828).